Reading from the N-terminus, the 387-residue chain is Succinate--CoA ligase [ADP-forming] subunit beta (387 aa).

The ATP-grasp domain occupies 9–236 (KELFAKHNVP…RAATDPLELK (228 aa)). ATP contacts are provided by residues K45, 52 to 54 (GRG), S94, and E99. Positions 191 and 205 each coordinate Mg(2+). Residues N256 and 318-320 (GIT) each bind substrate.

The protein belongs to the succinate/malate CoA ligase beta subunit family. As to quaternary structure, heterotetramer of two alpha and two beta subunits. Mg(2+) is required as a cofactor.

It catalyses the reaction succinate + ATP + CoA = succinyl-CoA + ADP + phosphate. The enzyme catalyses GTP + succinate + CoA = succinyl-CoA + GDP + phosphate. Its pathway is carbohydrate metabolism; tricarboxylic acid cycle; succinate from succinyl-CoA (ligase route): step 1/1. Succinyl-CoA synthetase functions in the citric acid cycle (TCA), coupling the hydrolysis of succinyl-CoA to the synthesis of either ATP or GTP and thus represents the only step of substrate-level phosphorylation in the TCA. The beta subunit provides nucleotide specificity of the enzyme and binds the substrate succinate, while the binding sites for coenzyme A and phosphate are found in the alpha subunit. This is Succinate--CoA ligase [ADP-forming] subunit beta from Mycobacterium tuberculosis (strain CDC 1551 / Oshkosh).